A 522-amino-acid polypeptide reads, in one-letter code: F-box/LRR-repeat protein 16 (522 aa).

Positions 38-84 constitute an F-box domain; the sequence is YDFTANLPDDCLAHIFQFLSAGDRKRCSLVSKRWLLVDGQNRHRLSL. LRR repeat units follow at residues 115 to 140, 141 to 166, 169 to 191, 266 to 290, 291 to 316, 319 to 344, 348 to 369, 370 to 393, 395 to 420, and 421 to 447; these read SFSLSDEALFIVSIRCSNLIRVKLRG, CREITDLGMESFARNCKSLRKLSCGS, FGAKGINAMLEHCKVLEELSLKR, RLQVTDIGLFGISKCSNLETLHIVK, TPDCSNLGLASVVERCKLLRKLHIDG, VKRIGDQGLMSVAKHCLNLQELVLIG, TYMSLSAIASNCKKLERLALCG, SGTIGDAEIGCIAEKCVTLRKFCI, GCLISDVGVQALALGCPKLVKLKVKK, and CSLVTGEVREWLRERRMTLVVSMDDDE.

The polypeptide is F-box/LRR-repeat protein 16 (FBL16) (Arabidopsis thaliana (Mouse-ear cress)).